The following is a 77-amino-acid chain: Acyl carrier protein (77 aa).

In terms of domain architecture, Carrier spans 4 to 77; it reads SETFEKVKKI…TVQAAVDXIN (74 aa). Ser-40 carries the O-(pantetheine 4'-phosphoryl)serine modification.

Belongs to the acyl carrier protein (ACP) family. Post-translationally, 4'-phosphopantetheine is transferred from CoA to a specific serine of apo-ACP by AcpS. This modification is essential for activity because fatty acids are bound in thioester linkage to the sulfhydryl of the prosthetic group.

It localises to the cytoplasm. It functions in the pathway lipid metabolism; fatty acid biosynthesis. In terms of biological role, carrier of the growing fatty acid chain in fatty acid biosynthesis. This chain is Acyl carrier protein, found in Anabaena variabilis.